The primary structure comprises 248 residues: ATP synthase subunit a, chloroplastic (248 aa).

5 helical membrane passes run 38–58 (QVLI…AIAV), 96–116 (VPFI…GALL), 135–155 (INTT…AGLT), 200–220 (LVVV…VMFL), and 221–241 (GLFT…AYIG).

Belongs to the ATPase A chain family. F-type ATPases have 2 components, CF(1) - the catalytic core - and CF(0) - the membrane proton channel. CF(1) has five subunits: alpha(3), beta(3), gamma(1), delta(1), epsilon(1). CF(0) has four main subunits: a, b, b' and c.

It localises to the plastid. It is found in the chloroplast thylakoid membrane. Its function is as follows. Key component of the proton channel; it plays a direct role in the translocation of protons across the membrane. This Nuphar advena (Common spatterdock) protein is ATP synthase subunit a, chloroplastic.